The primary structure comprises 210 residues: Inner membrane-spanning protein YciB (210 aa).

A run of 6 helical transmembrane segments spans residues 19 to 39, 53 to 73, 78 to 98, 115 to 135, 148 to 168, and 175 to 195; these read LVLE…GDWL, IFIA…VSWI, LPMM…LTLW, LFGA…GYVF, KLTI…EIVW, and FWVA…TLAQ.

The protein belongs to the YciB family.

The protein resides in the cell inner membrane. In terms of biological role, plays a role in cell envelope biogenesis, maintenance of cell envelope integrity and membrane homeostasis. The sequence is that of Inner membrane-spanning protein YciB from Sinorhizobium fredii (strain NBRC 101917 / NGR234).